The sequence spans 176 residues: Protein singles bar (176 aa).

A run of 4 helical transmembrane segments spans residues 13–35, 71–91, 111–131, and 140–160; these read LGIRICCCRVCTCINFGFVLSRI, FLATTGHCFTTTGILLLCYAF, LASCMYFSSSSYMGFACVVWL, and GFWAYPAMTACYYMGYAAGIL. In terms of domain architecture, MARVEL spans 30–173; sequence FVLSRIGLLK…DAYLAFRHFR (144 aa).

The protein resides in the membrane. Functionally, essential for myoblast fusion in developing embryos and pupae, and consequently is essential for muscle formation in adults. Required for progression past the pre-fusion complex stage of myoblast fusion. The sequence is that of Protein singles bar from Drosophila melanogaster (Fruit fly).